Reading from the N-terminus, the 512-residue chain is Maturase K (512 aa).

Belongs to the intron maturase 2 family. MatK subfamily.

It localises to the plastid. The protein resides in the chloroplast. Functionally, usually encoded in the trnK tRNA gene intron. Probably assists in splicing its own and other chloroplast group II introns. The chain is Maturase K from Oenothera parviflora (Small-flowered evening primrose).